The primary structure comprises 314 residues: Olfactory receptor 5P51 (314 aa).

The Extracellular segment spans residues 1-28 (MAFLEDGNHTAVTEFVLFGLTDDPVLRV). Asparagine 8 carries an N-linked (GlcNAc...) asparagine glycan. Residues 29–49 (ILFIIFLCIYLVNVSGNLSTI) form a helical membrane-spanning segment. Over 50-57 (LLIRVSSQ) the chain is Cytoplasmic. The helical transmembrane segment at 58–78 (LHHPMYFFLSHLASVDVGYSS) threads the bilayer. Residues 79–102 (TVTPKMLANFLLERSTISYLGCTI) are Extracellular-facing. An intrachain disulfide couples cysteine 100 to cysteine 192. A helical transmembrane segment spans residues 103–123 (QLFSGAFVGTLECFLLATMAY). The Cytoplasmic portion of the chain corresponds to 124 to 136 (DRFIAICNPLLYS). Residues 137 to 157 (TKMSTQVCIQLLVGSYIGGFL) traverse the membrane as a helical segment. Residues 158–199 (NASSFLLSFFPLLFCGPNRVNHYSCDLTPLIELSCSGSNVPI) are Extracellular-facing. A helical membrane pass occupies residues 200 to 220 (VPASFCSAFVIIVTVSVIAIS). Over 221–240 (YTYILITILKMRSTEGRQKA) the chain is Cytoplasmic. The chain crosses the membrane as a helical span at residues 241–261 (FSTCTSHLTAVTLYYGTVTFI). The Extracellular segment spans residues 262-274 (YVMPKSSYSTDQN). A helical membrane pass occupies residues 275 to 295 (KVVSVFYTVVIPMLNPIIYSL). At 296-314 (RNNEIKGALKRQLARKIFS) the chain is on the cytoplasmic side.

The protein belongs to the G-protein coupled receptor 1 family.

The protein localises to the cell membrane. Its function is as follows. Potential odorant receptor. The chain is Olfactory receptor 5P51 from Mus musculus (Mouse).